Consider the following 164-residue polypeptide: UPF0114 protein Sbal_0780 (164 aa).

The next 4 membrane-spanning stretches (helical) occupy residues 15-35 (IMAPIYLGLSLILFALGVKFF), 53-73 (LVLLTLSLIDITLVGGLIVMV), 109-129 (VAASIVAISSIHLLKVFMNAE), and 136-156 (IMWYLLIHITFVLSAFAMGYL).

Belongs to the UPF0114 family.

The protein resides in the cell membrane. The protein is UPF0114 protein Sbal_0780 of Shewanella baltica (strain OS155 / ATCC BAA-1091).